Consider the following 412-residue polypeptide: L-cysteine:1D-myo-inositol 2-amino-2-deoxy-alpha-D-glucopyranoside ligase (412 aa).

Position 45 (Cys-45) interacts with Zn(2+). L-cysteinyl-5'-AMP-binding positions include 45-48 (CGIT), Thr-60, and 83-85 (NIT). The 'HIGH' region motif lies at 47–57 (ITPYDAAHLGH). A 'ERGGDP' region motif is present at residues 185–190 (ERGGDP). Trp-225 is an L-cysteinyl-5'-AMP binding site. Cys-229 serves as a coordination point for Zn(2+). 247 to 249 (GDD) lines the L-cysteinyl-5'-AMP pocket. Position 254 (His-254) interacts with Zn(2+). Val-281 is a binding site for L-cysteinyl-5'-AMP. Residues 287–291 (KMSKS) carry the 'KMSKS' region motif.

Belongs to the class-I aminoacyl-tRNA synthetase family. MshC subfamily. In terms of assembly, monomer. Requires Zn(2+) as cofactor.

The enzyme catalyses 1D-myo-inositol 2-amino-2-deoxy-alpha-D-glucopyranoside + L-cysteine + ATP = 1D-myo-inositol 2-(L-cysteinylamino)-2-deoxy-alpha-D-glucopyranoside + AMP + diphosphate + H(+). Functionally, catalyzes the ATP-dependent condensation of GlcN-Ins and L-cysteine to form L-Cys-GlcN-Ins. The polypeptide is L-cysteine:1D-myo-inositol 2-amino-2-deoxy-alpha-D-glucopyranoside ligase (Thermobifida fusca (strain YX)).